The sequence spans 423 residues: MRKSVCPKQKFFFSAFPFFFFFCVFPLISRTGQEKLLFDQKYKIIKGEKKEKKKNQRANRREHQQKREIMRFKKSFTCIDMHTEGEAARIVTSGLPHIPGSNMAEKKAYLQENMDYLRRGIMLEPRGHDDMFGAFLFDPIEEGADLGMVFMDTGGYLNMCGHNSIAAVTAAVETGIVSVPAKATNVPVVLDTPAGLVRGTAHLQSGTESEVSNASIINVPSFLYQQDVVVVLPKPYGEVRVDIAFGGNFFAIVPAEQLGIDISVQNLSRLQEAGELLRTEINRSVKVQHPQLPHINTVDCVEIYGPPTNPEANYKNVVIFGNRQADRSPCGTGTSAKMATLYAKGQLRIGETFVYESILGSLFQGRVLGEERIPGVKVPVTKDAEEGMLVVTAEITGKAFIMGFNTMLFDPTDPFKNGFTLKQ.

An N-terminal signal peptide occupies residues 1-31; sequence MRKSVCPKQKFFFSAFPFFFFFCVFPLISRT. Cysteine 160 functions as the Proton acceptor in the catalytic mechanism. Position 161–162 (161–162) interacts with substrate; sequence GH. Asparagine 213, asparagine 266, and asparagine 282 each carry an N-linked (GlcNAc...) asparagine glycan. Aspartate 326 serves as a coordination point for substrate. Cysteine 330 acts as the Proton donor in catalysis. 331 to 332 lines the substrate pocket; it reads GT.

The protein belongs to the proline racemase family. Homodimer.

The protein localises to the secreted. Its subcellular location is the membrane. The protein resides in the cytoplasm. The catalysed reaction is L-proline = D-proline. With respect to regulation, inhibited by maleic acid, iodoacetamide, iodoacetate and, most particularly, pyrrole-2-carboxylic acid. Its function is as follows. Catalyzes the interconversion of L- and D-proline. Secreted isoform 1 contributes to parasite immune evasion by acting as a B-cell mitogen. Probably involved in parasite differentiation and infectivity. The chain is Proline racemase A (PA45-A) from Trypanosoma cruzi (strain CL Brener).